The sequence spans 486 residues: Flavin-dependent monooxygenase pboD (486 aa).

Residues Asp51, Gly65, and Arg124 each coordinate FAD. Arg203 is an active-site residue. Residues Asp344 and Gly357 each coordinate FAD.

The protein belongs to the paxM FAD-dependent monooxygenase family. FAD is required as a cofactor.

The protein operates within secondary metabolite biosynthesis. Flavin-dependent monooxygenase; part of the gene cluster that mediates the biosynthesis of protubonine B, a hydroxylated and diacetylated cyclo-L-Trp-L-Leu derivative. Within the pathway, pboD catalyzes the hydroxylation at C-3 of the indole ring of cyclo-L-Trp-L-Leu and subsequent formation of the pyrrolidine ring, eading to the production of protubonine D. PboD is also able to accept other cyclodipeptides (CDPs) as substrates, including cyclo-L-Trp-L-Trp, cyclo-L-Trp-L-Tyr, cyclo-L-Trp-L-Phe, cyclo-L-Trp-L-Met, cyclo-L-Trp-L-Ala, cyclo-L-Trp-L-Pro and cyclo-L-Trp-Gly. Assays with cyclo-L-Trp-L-Trp, cyclo-L-Trp-L-Tyr, cyclo-L-Trp-L-Phe show similar or even slightly higher conversion yields, compared with that of the natural substrate cyclo-L-Trp-L-Leu, whereas cyclo-L-Trp-L-Pro and cyclo-L-Trp-Gly are accepted by PboD but only with conversion yields of 10 and 4%, respectively. Cyclo-L-Trp-L-His is not accepted as a substrate. The first step of the protubonine B synthesis is performed by the nonribosomal peptide synthetase pboA that catalyzes the formation of cyclo-L-Trp-L-Leu by condensing L-Leu with L-Trp. The flavin-dependent monooxygenase pboD is responsible for hydroxylation at C-3 of the indole ring and subsequent formation of the pyrrolidine ring, leadind to protubonine D. Protubonine D is further diacetylated by two acetyltransferases, pboB and pboC, to form the final product protubonine B via protubonine C. This is Flavin-dependent monooxygenase pboD from Aspergillus ustus.